Consider the following 499-residue polypeptide: Guanosine-5'-triphosphate,3'-diphosphate pyrophosphatase (499 aa).

It belongs to the GppA/Ppx family. GppA subfamily.

It carries out the reaction guanosine 3'-diphosphate 5'-triphosphate + H2O = guanosine 3',5'-bis(diphosphate) + phosphate + H(+). The protein operates within purine metabolism; ppGpp biosynthesis; ppGpp from GTP: step 2/2. Catalyzes the conversion of pppGpp to ppGpp. Guanosine pentaphosphate (pppGpp) is a cytoplasmic signaling molecule which together with ppGpp controls the 'stringent response', an adaptive process that allows bacteria to respond to amino acid starvation, resulting in the coordinated regulation of numerous cellular activities. The protein is Guanosine-5'-triphosphate,3'-diphosphate pyrophosphatase of Sodalis glossinidius (strain morsitans).